Here is a 286-residue protein sequence, read N- to C-terminus: Formamidopyrimidine-DNA glycosylase (286 aa).

The active-site Schiff-base intermediate with DNA is Pro2. Glu3 (proton donor) is an active-site residue. Catalysis depends on Lys61, which acts as the Proton donor; for beta-elimination activity. 3 residues coordinate DNA: His103, Arg122, and Arg164. The segment at 250 to 284 (NAYAQTGEPCGRCGTLIIRESFMNRGSHYCPNCQK) adopts an FPG-type zinc-finger fold. Catalysis depends on Arg274, which acts as the Proton donor; for delta-elimination activity.

The protein belongs to the FPG family. Monomer. The cofactor is Zn(2+).

The catalysed reaction is Hydrolysis of DNA containing ring-opened 7-methylguanine residues, releasing 2,6-diamino-4-hydroxy-5-(N-methyl)formamidopyrimidine.. It catalyses the reaction 2'-deoxyribonucleotide-(2'-deoxyribose 5'-phosphate)-2'-deoxyribonucleotide-DNA = a 3'-end 2'-deoxyribonucleotide-(2,3-dehydro-2,3-deoxyribose 5'-phosphate)-DNA + a 5'-end 5'-phospho-2'-deoxyribonucleoside-DNA + H(+). Functionally, involved in base excision repair of DNA damaged by oxidation or by mutagenic agents. Acts as a DNA glycosylase that recognizes and removes damaged bases. Has a preference for oxidized purines, such as 7,8-dihydro-8-oxoguanine (8-oxoG). Has AP (apurinic/apyrimidinic) lyase activity and introduces nicks in the DNA strand. Cleaves the DNA backbone by beta-delta elimination to generate a single-strand break at the site of the removed base with both 3'- and 5'-phosphates. This chain is Formamidopyrimidine-DNA glycosylase, found in Corynebacterium glutamicum (strain ATCC 13032 / DSM 20300 / JCM 1318 / BCRC 11384 / CCUG 27702 / LMG 3730 / NBRC 12168 / NCIMB 10025 / NRRL B-2784 / 534).